Consider the following 200-residue polypeptide: NAD(P)H dehydrogenase (quinone) (200 aa).

Positions 4 to 191 constitute a Flavodoxin-like domain; it reads VLVLYYSSYG…DIARYQGKHV (188 aa). Residues 10 to 15 and 79 to 81 each bind FMN; these read SSYGHV and TRF. Tyr12 contacts NAD(+). Trp99 is a substrate binding site. FMN is bound by residues 114–120 and His135; that span reads STGTQHG.

Belongs to the WrbA family. It depends on FMN as a cofactor.

It carries out the reaction a quinone + NADH + H(+) = a quinol + NAD(+). It catalyses the reaction a quinone + NADPH + H(+) = a quinol + NADP(+). The protein is NAD(P)H dehydrogenase (quinone) of Burkholderia vietnamiensis (strain G4 / LMG 22486) (Burkholderia cepacia (strain R1808)).